The following is a 189-amino-acid chain: Ribosome maturation factor RimM (189 aa).

The PRC barrel domain maps to 96–169; it reads EDEFFQTDLI…TLLVEPYAAG (74 aa). Residues 170 to 189 are disordered; it reads LIADDEDERPQNEKKKPKKS.

The protein belongs to the RimM family. In terms of assembly, binds ribosomal protein uS19.

It is found in the cytoplasm. Its function is as follows. An accessory protein needed during the final step in the assembly of 30S ribosomal subunit, possibly for assembly of the head region. Essential for efficient processing of 16S rRNA. May be needed both before and after RbfA during the maturation of 16S rRNA. It has affinity for free ribosomal 30S subunits but not for 70S ribosomes. The chain is Ribosome maturation factor RimM from Brucella anthropi (strain ATCC 49188 / DSM 6882 / CCUG 24695 / JCM 21032 / LMG 3331 / NBRC 15819 / NCTC 12168 / Alc 37) (Ochrobactrum anthropi).